A 325-amino-acid chain; its full sequence is Adenine deaminase (325 aa).

Zn(2+) contacts are provided by histidine 11, histidine 13, and histidine 189. Glutamate 192 serves as the catalytic Proton donor. A Zn(2+)-binding site is contributed by aspartate 270. Residue aspartate 271 participates in substrate binding.

The protein belongs to the metallo-dependent hydrolases superfamily. Adenosine and AMP deaminases family. Adenine deaminase type 2 subfamily. Zn(2+) serves as cofactor.

The enzyme catalyses adenine + H2O + H(+) = hypoxanthine + NH4(+). Its function is as follows. Catalyzes the hydrolytic deamination of adenine to hypoxanthine. Plays an important role in the purine salvage pathway and in nitrogen catabolism. The polypeptide is Adenine deaminase (Agrobacterium fabrum (strain C58 / ATCC 33970) (Agrobacterium tumefaciens (strain C58))).